The sequence spans 176 residues: NADH-dependent flavin reductase (176 aa).

Residues 39–46 (EDSVHGMT) and 48–49 (NA) contribute to the FAD site. S52 provides a ligand contact to NAD(+). Residues 63 to 65 (SIS), 69 to 70 (KM), and 95 to 96 (HF) contribute to the FAD site. Residues H137 and 157-160 (FYTG) contribute to the NAD(+) site.

Belongs to the non-flavoprotein flavin reductase family. As to quaternary structure, homodimer. 4-nitrophenol 2-monooxygenase complex consists of an oxygenase component NphA1 and a flavin reductase component NphA2.

It catalyses the reaction a reduced flavin + NAD(+) = an oxidized flavin + NADH + 2 H(+). In terms of biological role, catalyzes the reduction of FAD with the concomitant oxidation of NADH. NAD is the physiological electron donor. Subsequently, the reduced flavins diffuse to the oxygenase component NphA2. The sequence is that of NADH-dependent flavin reductase (nphA2) from Rhodococcus sp.